Reading from the N-terminus, the 426-residue chain is Enolase (426 aa).

Q163 contacts (2R)-2-phosphoglycerate. E205 (proton donor) is an active-site residue. Mg(2+) is bound by residues D242, E285, and D312. (2R)-2-phosphoglycerate is bound by residues K337, R366, S367, and K388. K337 functions as the Proton acceptor in the catalytic mechanism.

The protein belongs to the enolase family. Mg(2+) serves as cofactor.

It is found in the cytoplasm. Its subcellular location is the secreted. The protein resides in the cell surface. It catalyses the reaction (2R)-2-phosphoglycerate = phosphoenolpyruvate + H2O. The protein operates within carbohydrate degradation; glycolysis; pyruvate from D-glyceraldehyde 3-phosphate: step 4/5. In terms of biological role, catalyzes the reversible conversion of 2-phosphoglycerate (2-PG) into phosphoenolpyruvate (PEP). It is essential for the degradation of carbohydrates via glycolysis. The polypeptide is Enolase (Gluconacetobacter diazotrophicus (strain ATCC 49037 / DSM 5601 / CCUG 37298 / CIP 103539 / LMG 7603 / PAl5)).